Reading from the N-terminus, the 471-residue chain is MSKKYDAGVKEYRDTYWTPEYVPLDTDLLACFKCTGQEGVPREEVAAAVAAESSTGTWSTVWSELLTDLEFYKGRCYRIEDVPGDPEAFYAFIAYPLDLFEEGSITNVLTSLVGNVFGFKALRHLRLEDIRFPIAFIKTCGGPPNGIVVERDRLNKYGRPLLGCTIKPKLGLSGKNYGRVVYECLRGGLDLTKDDENINSQPFQRWRERFEFVAEAVKLAQQETGEVKGHYLNCTANTPEELYERAEFAKELDMPIIMHDYITGGFTANTGLANWCRKNGMLLHIHRAMHAVIDRHPKHGIHFRVLAKCLRLSGGDQLHTGTVVGKLEGDRQTTLGYIDNLRESFVPEDRSRGNFFDQDWGSMPGVFAVASGGIHVWHMPALLAIFGDDSCLQFGGGTHGHPWGSAAGAAANRVALEACVKARNAGREIEKESRDILMEAAKHSPELAIALETWKEIKFEFDTVDKLDVQG.

Positions 115 and 165 each coordinate substrate. The active-site Proton acceptor is Lys-167. Lys-169 is a binding site for substrate. Residues Lys-193, Asp-195, and Glu-196 each contribute to the Mg(2+) site. Position 193 is an N6-carboxylysine (Lys-193). The active-site Proton acceptor is His-286. Positions 287, 319, and 371 each coordinate substrate.

This sequence belongs to the RuBisCO large chain family. Type I subfamily. In terms of assembly, heterohexadecamer of 8 large chains and 8 small chains. It depends on Mg(2+) as a cofactor.

The protein localises to the carboxysome. The enzyme catalyses 2 (2R)-3-phosphoglycerate + 2 H(+) = D-ribulose 1,5-bisphosphate + CO2 + H2O. It carries out the reaction D-ribulose 1,5-bisphosphate + O2 = 2-phosphoglycolate + (2R)-3-phosphoglycerate + 2 H(+). In terms of biological role, ruBisCO catalyzes two reactions: the carboxylation of D-ribulose 1,5-bisphosphate, the primary event in carbon dioxide fixation, as well as the oxidative fragmentation of the pentose substrate in the photorespiration process. Both reactions occur simultaneously and in competition at the same active site. This chain is Ribulose bisphosphate carboxylase large chain, found in Prochlorococcus marinus (strain MIT 9515).